We begin with the raw amino-acid sequence, 521 residues long: Alkyl hydroperoxide reductase subunit F (521 aa).

213-228 lines the FAD pocket; the sequence is DVLVVGGGPAGAAAAI. Residues cysteine 344 and cysteine 347 are joined by a disulfide bond. Residue 356-370 coordinates NAD(+); the sequence is RVAVIGGGNSGVEAA. Position 477 to 487 (477 to 487) interacts with FAD; sequence TSLPGIFAAGD.

Belongs to the class-II pyridine nucleotide-disulfide oxidoreductase family. As to quaternary structure, homodimer. The cofactor is FAD.

Functionally, serves to protect the cell against DNA damage by alkyl hydroperoxides. It can use either NADH or NADPH as electron donor for direct reduction of redox dyes or of alkyl hydroperoxides when combined with the AhpC protein. In Pseudomonas aeruginosa (strain ATCC 15692 / DSM 22644 / CIP 104116 / JCM 14847 / LMG 12228 / 1C / PRS 101 / PAO1), this protein is Alkyl hydroperoxide reductase subunit F (ahpF).